The primary structure comprises 350 residues: Nicotinate-nucleotide--dimethylbenzimidazole phosphoribosyltransferase (350 aa).

Glu317 serves as the catalytic Proton acceptor.

It belongs to the CobT family.

The enzyme catalyses 5,6-dimethylbenzimidazole + nicotinate beta-D-ribonucleotide = alpha-ribazole 5'-phosphate + nicotinate + H(+). Its pathway is nucleoside biosynthesis; alpha-ribazole biosynthesis; alpha-ribazole from 5,6-dimethylbenzimidazole: step 1/2. Catalyzes the synthesis of alpha-ribazole-5'-phosphate from nicotinate mononucleotide (NAMN) and 5,6-dimethylbenzimidazole (DMB). In Shewanella sp. (strain MR-4), this protein is Nicotinate-nucleotide--dimethylbenzimidazole phosphoribosyltransferase.